A 971-amino-acid chain; its full sequence is Translation initiation factor IF-2 (971 aa).

Residues 48 to 63 (DHLRKSHGATDGDKRK) are compositionally biased toward basic and acidic residues. 2 disordered regions span residues 48–86 (DHLR…ARTI) and 100–381 (DDVA…STFQ). A compositionally biased stretch (low complexity) spans 105 to 114 (GADQGQAQVA). The segment covering 121–181 (ELKRREEEAR…EEEAATKRAA (61 aa)) has biased composition (basic and acidic residues). Positions 182–202 (AEVAAAQQQAAAQQAAAEQEA) are enriched in low complexity. A compositionally biased stretch (basic and acidic residues) spans 210–261 (DEARAAAERAAQREAAKKAEDAAREAADKARAEQEEISKRRAAAEAEARAIR). Pro residues predominate over residues 277–286 (PPKPVEPPKP). The segment covering 304 to 326 (ARPAVKKPAGAAAPATTQAPAGA) has biased composition (low complexity). A compositionally biased stretch (gly residues) spans 356–369 (SSGGVDRGWRGGPK). The 170-residue stretch at 471-640 (PRPPVVTVMG…LLQAEVLELK (170 aa)) folds into the tr-type G domain. Residues 480–487 (GHVDHGKT) are G1. 480–487 (GHVDHGKT) is a GTP binding site. The interval 505-509 (GITQH) is G2. Positions 526–529 (DTPG) are G3. GTP-binding positions include 526 to 530 (DTPGH) and 580 to 583 (NKID). The G4 stretch occupies residues 580–583 (NKID). The segment at 616–618 (SAK) is G5.

Belongs to the TRAFAC class translation factor GTPase superfamily. Classic translation factor GTPase family. IF-2 subfamily.

The protein localises to the cytoplasm. Its function is as follows. One of the essential components for the initiation of protein synthesis. Protects formylmethionyl-tRNA from spontaneous hydrolysis and promotes its binding to the 30S ribosomal subunits. Also involved in the hydrolysis of GTP during the formation of the 70S ribosomal complex. The protein is Translation initiation factor IF-2 of Burkholderia orbicola (strain AU 1054).